The sequence spans 872 residues: Alanine--tRNA ligase (872 aa).

4 residues coordinate Zn(2+): His567, His571, Cys669, and His673.

Belongs to the class-II aminoacyl-tRNA synthetase family. It depends on Zn(2+) as a cofactor.

The protein localises to the cytoplasm. The catalysed reaction is tRNA(Ala) + L-alanine + ATP = L-alanyl-tRNA(Ala) + AMP + diphosphate. Functionally, catalyzes the attachment of alanine to tRNA(Ala) in a two-step reaction: alanine is first activated by ATP to form Ala-AMP and then transferred to the acceptor end of tRNA(Ala). Also edits incorrectly charged Ser-tRNA(Ala) and Gly-tRNA(Ala) via its editing domain. The sequence is that of Alanine--tRNA ligase from Streptococcus agalactiae serotype Ia (strain ATCC 27591 / A909 / CDC SS700).